The following is a 262-amino-acid chain: Ribosomal RNA small subunit methyltransferase A (262 aa).

Residues N14, L16, G41, E62, D87, and N109 each coordinate S-adenosyl-L-methionine.

Belongs to the class I-like SAM-binding methyltransferase superfamily. rRNA adenine N(6)-methyltransferase family. RsmA subfamily.

The protein resides in the cytoplasm. The catalysed reaction is adenosine(1518)/adenosine(1519) in 16S rRNA + 4 S-adenosyl-L-methionine = N(6)-dimethyladenosine(1518)/N(6)-dimethyladenosine(1519) in 16S rRNA + 4 S-adenosyl-L-homocysteine + 4 H(+). Its function is as follows. Specifically dimethylates two adjacent adenosines (A1518 and A1519) in the loop of a conserved hairpin near the 3'-end of 16S rRNA in the 30S particle. May play a critical role in biogenesis of 30S subunits. The sequence is that of Ribosomal RNA small subunit methyltransferase A from Francisella tularensis subsp. tularensis (strain FSC 198).